The sequence spans 502 residues: Bone morphogenetic protein receptor type-1B (502 aa).

The span at 1–10 (MPLLSSSKLS) shows a compositional bias: polar residues. The first 13 residues, 1–13 (MPLLSSSKLSMES), serve as a signal peptide directing secretion. Residues 1–27 (MPLLSSSKLSMESRKEDSEGTAPAPPQ) are disordered. Residues 14-126 (RKEDSEGTAP…DFAEGNIHHK (113 aa)) lie on the Extracellular side of the membrane. 5 cysteine pairs are disulfide-bonded: cysteine 32–cysteine 53, cysteine 34–cysteine 38, cysteine 47–cysteine 71, cysteine 81–cysteine 95, and cysteine 96–cysteine 102. Asparagine 44 is a glycosylation site (N-linked (GlcNAc...) asparagine). Residues 127 to 148 (ALLISVTVCSILLVLIIIFCYF) form a helical membrane-spanning segment. Topologically, residues 149 to 502 (RYKRQEARPR…KMSESQDIKL (354 aa)) are cytoplasmic. Residues 174–203 (ESLKDLIEQSQSSGSGSGLPLLVQRTIAKQ) form the GS domain. The 291-residue stretch at 204-494 (IQMVKQIGKG…LRVKKTLAKM (291 aa)) folds into the Protein kinase domain. ATP contacts are provided by residues 210–218 (IGKGRYGEV) and lysine 231. Aspartate 332 (proton acceptor) is an active-site residue.

Belongs to the protein kinase superfamily. TKL Ser/Thr protein kinase family. TGFB receptor subfamily. Requires Mg(2+) as cofactor. Mn(2+) is required as a cofactor. In terms of processing, autophosphorylated.

The protein resides in the cell membrane. It carries out the reaction L-threonyl-[receptor-protein] + ATP = O-phospho-L-threonyl-[receptor-protein] + ADP + H(+). It catalyses the reaction L-seryl-[receptor-protein] + ATP = O-phospho-L-seryl-[receptor-protein] + ADP + H(+). Functionally, on ligand binding, forms a receptor complex consisting of two type II and two type I transmembrane serine/threonine kinases. Type II receptors phosphorylate and activate type I receptors which autophosphorylate, then bind and activate SMAD transcription. Positively regulates chondrocyte differentiation. This chain is Bone morphogenetic protein receptor type-1B (BMPR1B), found in Gallus gallus (Chicken).